The sequence spans 371 residues: Probable cysteine protease RDL5 (371 aa).

Positions 1–23 (MGYAKSAMLIFLLALVIASCATA) are cleaved as a signal peptide. The propeptide at 24–143 (MDMSVVSSND…NRYKTSDGDV (120 aa)) is activation peptide. Asn-94 carries an N-linked (GlcNAc...) asparagine glycan. 3 disulfide bridges follow: Cys-165–Cys-206, Cys-199–Cys-239, and Cys-298–Cys-349. Residue Cys-168 is part of the active site. Catalysis depends on residues His-304 and Asn-324.

The protein belongs to the peptidase C1 family. As to expression, expressed in roots, inflorescences and siliques.

Possesses protease activity in vitro. This chain is Probable cysteine protease RDL5, found in Arabidopsis thaliana (Mouse-ear cress).